Here is a 345-residue protein sequence, read N- to C-terminus: MNRYKEAGVDVTAGYDLVNRIKPLVAATKRKGVMGSIGSFGGMFDLEELGYKHPVLVSGTDGVGTKLMIAQKMHKNDTVGIDCVAMCVNDVLAQGAEPLFFLDYIACGHNDPERLADVVKGVAEGCKQSGSALIGGETAEMPDMYEPHEYDLAGFSTGIAEKEDLLSSSLAKAGDHLIALPSSGVHSNGFSLIRKILFKDHDVSLDDKPAELSGKTVGETLLTPTRIYIKAVLPLVKKHLIHGIAHITGGGFIENLPRIYDDNLQAVINKGSWPGLPIFDYLKKIGVLSDQDCYNTFNMGIGLVLAVSSENVDAVKEQLNTENEEFYEIGKLTARPAGKAKIVIE.

Belongs to the AIR synthase family.

It localises to the cytoplasm. The enzyme catalyses 2-formamido-N(1)-(5-O-phospho-beta-D-ribosyl)acetamidine + ATP = 5-amino-1-(5-phospho-beta-D-ribosyl)imidazole + ADP + phosphate + H(+). The protein operates within purine metabolism; IMP biosynthesis via de novo pathway; 5-amino-1-(5-phospho-D-ribosyl)imidazole from N(2)-formyl-N(1)-(5-phospho-D-ribosyl)glycinamide: step 2/2. This chain is Phosphoribosylformylglycinamidine cyclo-ligase, found in Lactobacillus acidophilus (strain ATCC 700396 / NCK56 / N2 / NCFM).